A 583-amino-acid polypeptide reads, in one-letter code: Isocitrate dehydrogenase kinase/phosphatase (583 aa).

Residues alanine 315–methionine 321 and lysine 336 each bind ATP. Aspartate 371 is an active-site residue.

This sequence belongs to the AceK family.

The protein localises to the cytoplasm. It catalyses the reaction L-seryl-[isocitrate dehydrogenase] + ATP = O-phospho-L-seryl-[isocitrate dehydrogenase] + ADP + H(+). Its function is as follows. Bifunctional enzyme which can phosphorylate or dephosphorylate isocitrate dehydrogenase (IDH) on a specific serine residue. This is a regulatory mechanism which enables bacteria to bypass the Krebs cycle via the glyoxylate shunt in response to the source of carbon. When bacteria are grown on glucose, IDH is fully active and unphosphorylated, but when grown on acetate or ethanol, the activity of IDH declines drastically concomitant with its phosphorylation. This Salmonella dublin (strain CT_02021853) protein is Isocitrate dehydrogenase kinase/phosphatase.